A 237-amino-acid polypeptide reads, in one-letter code: Cell division cycle-associated protein 4 (237 aa).

In terms of domain architecture, SERTA spans 26 to 73 (YSLQRQSLLDMSLVKLQLCHMLVEPNLCRSVLIANTVRQIQEEMSQDG).

Expressed preferentially in hematopoietic progenitors and mature blood cells. Expressed at low levels in the heart, lung, spleen, and thymus and at a higher level in muscle.

The protein localises to the nucleus. Its function is as follows. May participate in the regulation of cell proliferation through the E2F/RB pathway. May be involved in molecular regulation of hematopoietic stem cells and progenitor cell lineage commitment and differentiation. The sequence is that of Cell division cycle-associated protein 4 (Cdca4) from Mus musculus (Mouse).